A 502-amino-acid chain; its full sequence is Protein Dok-7 (502 aa).

A PH domain is found at 4 to 109; it reads SVVVEGYARL…WDARLRYSLG (106 aa). In terms of domain architecture, IRS-type PTB spans 105–210; sequence RYSLGEVHRF…RGISPTRGPF (106 aa). Disordered stretches follow at residues 210-232, 249-279, 291-358, and 418-482; these read FGLR…RLNH, STAS…SDCS, TSIQ…GSFS, and EVGG…GHPG. Low complexity-rich tracts occupy residues 264 to 279 and 301 to 316; these read ISGS…SDCS and AGAK…PLPS. Residues 336-346 show a composition bias toward polar residues; sequence GRQSSSDSGIA. Positions 347–358 are enriched in low complexity; that stretch reads TGSHSSYSGSFS. The span at 459-473 shows a compositional bias: basic and acidic residues; sequence PNEHFRSPSESKKSS.

The protein localises to the cell membrane. It localises to the synapse. Probable muscle-intrinsic activator of MUSK that plays an essential role in neuromuscular synaptogenesis. Acts in aneural activation of MUSK and subsequent acetylcholine receptor (AchR) clustering in myotubes. The polypeptide is Protein Dok-7 (dok7) (Takifugu rubripes (Japanese pufferfish)).